The primary structure comprises 262 residues: MAVAVEGARRKERILCLFDVDGTLTPARQKIDPEVSAFLQKLRSRVQIGVVGGSDYSKIAEQLGEGDEVIEKFDYVFAENGTVQYKHGRLLSKQTIQNHLGEELLQDLINFCLSYMALLRLPKKRGTFIEFRNGMLNVSPIGRSCTLEERIEFSELDKKEKIREKFVEALKTEFAGKGLRFSRGGMISFDVFPEGWDKRYCLDSLDEDSFDIIHFFGNETSPGGNDFEIYADPRTVGHSVVSPQDTVQRCRELFFPETAHEA.

The residue at position 2 (Ala2) is an N-acetylalanine. The active-site Nucleophile is the Asp19. Mg(2+) contacts are provided by Asp19 and Asp21. The active-site Proton donor/acceptor is Asp21. Alpha-D-mannose 1-phosphate-binding residues include Arg28, Arg132, Arg143, Arg150, Met186, Ser188, and Asp190. The Mg(2+) site is built by Asn218, Tyr230, Asp232, and Thr235. A Phosphoserine modification is found at Ser242.

The protein belongs to the eukaryotic PMM family. In terms of assembly, homodimer. Mg(2+) serves as cofactor. Present in brain, where it is restricted to neuronal cell bodies. Present at lower levels in pancreas, liver, lung, gonads, uterus, adrenal glands and pituitary (at protein level). Undetectable in intestine.

The protein resides in the cytoplasm. It carries out the reaction alpha-D-mannose 1-phosphate = D-mannose 6-phosphate. It participates in nucleotide-sugar biosynthesis; GDP-alpha-D-mannose biosynthesis; alpha-D-mannose 1-phosphate from D-fructose 6-phosphate: step 2/2. IMP, a metabolite whose concentration is elevated in anoxia, inhibits phosphomannomutase and phosphoglucomutase activities and strongly enhances glucose-1,6-bisphosphatase activity. Involved in the synthesis of the GDP-mannose and dolichol-phosphate-mannose required for a number of critical mannosyl transfer reactions. In addition, may be responsible for the degradation of glucose-1,6-bisphosphate in ischemic brain. This Mus musculus (Mouse) protein is Phosphomannomutase 1 (Pmm1).